The sequence spans 561 residues: Glutamate--tRNA ligase (561 aa).

A 'HIGH' region motif is present at residues Pro107–His117.

It belongs to the class-I aminoacyl-tRNA synthetase family. Glutamate--tRNA ligase type 2 subfamily.

The protein resides in the cytoplasm. It carries out the reaction tRNA(Glu) + L-glutamate + ATP = L-glutamyl-tRNA(Glu) + AMP + diphosphate. In terms of biological role, catalyzes the attachment of glutamate to tRNA(Glu) in a two-step reaction: glutamate is first activated by ATP to form Glu-AMP and then transferred to the acceptor end of tRNA(Glu). The protein is Glutamate--tRNA ligase of Methanoculleus marisnigri (strain ATCC 35101 / DSM 1498 / JR1).